Here is a 300-residue protein sequence, read N- to C-terminus: Polyamine aminopropyltransferase (300 aa).

The PABS domain occupies 4 to 237 (WHWHIEWQTP…GLWGFVYASD (234 aa)). Residue Gln-33 coordinates S-methyl-5'-thioadenosine. Residues His-64 and Glu-88 each contribute to the spermidine site. Residues Asp-108 and 140–141 (DG) each bind S-methyl-5'-thioadenosine. The active-site Proton acceptor is the Asp-158. Pro-167 provides a ligand contact to S-methyl-5'-thioadenosine.

It belongs to the spermidine/spermine synthase family. In terms of assembly, homodimer or homotetramer.

It localises to the cytoplasm. The enzyme catalyses S-adenosyl 3-(methylsulfanyl)propylamine + putrescine = S-methyl-5'-thioadenosine + spermidine + H(+). The protein operates within amine and polyamine biosynthesis; spermidine biosynthesis; spermidine from putrescine: step 1/1. Its function is as follows. Catalyzes the irreversible transfer of a propylamine group from the amino donor S-adenosylmethioninamine (decarboxy-AdoMet) to putrescine (1,4-diaminobutane) to yield spermidine. The protein is Polyamine aminopropyltransferase of Sulfurisphaera tokodaii (strain DSM 16993 / JCM 10545 / NBRC 100140 / 7) (Sulfolobus tokodaii).